Here is a 904-residue protein sequence, read N- to C-terminus: Phosphoenolpyruvate carboxylase (904 aa).

Active-site residues include H151 and K570.

It belongs to the PEPCase type 1 family. It depends on Mg(2+) as a cofactor.

It carries out the reaction oxaloacetate + phosphate = phosphoenolpyruvate + hydrogencarbonate. Forms oxaloacetate, a four-carbon dicarboxylic acid source for the tricarboxylic acid cycle. This Xanthomonas campestris pv. campestris (strain ATCC 33913 / DSM 3586 / NCPPB 528 / LMG 568 / P 25) protein is Phosphoenolpyruvate carboxylase.